Reading from the N-terminus, the 311-residue chain is N-acetylmuramic acid 6-phosphate etherase (311 aa).

One can recognise an SIS domain in the interval 66–229 (VAVRMARGGR…STITMIRLGK (164 aa)). Residue glutamate 94 is the Proton donor of the active site. Glutamate 125 is an active-site residue.

Belongs to the GCKR-like family. MurNAc-6-P etherase subfamily. As to quaternary structure, homodimer.

It catalyses the reaction N-acetyl-D-muramate 6-phosphate + H2O = N-acetyl-D-glucosamine 6-phosphate + (R)-lactate. The protein operates within amino-sugar metabolism; N-acetylmuramate degradation. Specifically catalyzes the cleavage of the D-lactyl ether substituent of MurNAc 6-phosphate, producing GlcNAc 6-phosphate and D-lactate. The chain is N-acetylmuramic acid 6-phosphate etherase from Streptomyces coelicolor (strain ATCC BAA-471 / A3(2) / M145).